The sequence spans 278 residues: ATP synthase subunit a (278 aa).

Transmembrane regions (helical) follow at residues 41-61, 108-128, 149-168, 180-200, 222-242, and 244-264; these read FLNIDSLFFSFFLGIIFLLFF, LTIFVWLFLMNLMDLIPVDFV, INITLSMSLGVFLLILYFGI, FFFQPFNNYLLIPVNLVLELI, LIFILISGLLPWWLQWILSVP, and AIFHILIIILQAFIFMILTII.

Belongs to the ATPase A chain family. F-type ATPases have 2 components, CF(1) - the catalytic core - and CF(0) - the membrane proton channel. CF(1) has five subunits: alpha(3), beta(3), gamma(1), delta(1), epsilon(1). CF(0) has three main subunits: a(1), b(2) and c(9-12). The alpha and beta chains form an alternating ring which encloses part of the gamma chain. CF(1) is attached to CF(0) by a central stalk formed by the gamma and epsilon chains, while a peripheral stalk is formed by the delta and b chains.

It localises to the cell membrane. Its function is as follows. Key component of the proton channel; it plays a direct role in the translocation of protons across the membrane. This chain is ATP synthase subunit a, found in Wigglesworthia glossinidia brevipalpis.